The primary structure comprises 274 residues: Ribosomal RNA small subunit methyltransferase A (274 aa).

S-adenosyl-L-methionine is bound by residues Asn28, Leu30, Gly55, Glu77, Asp103, and Asn122.

It belongs to the class I-like SAM-binding methyltransferase superfamily. rRNA adenine N(6)-methyltransferase family. RsmA subfamily.

The protein resides in the cytoplasm. The enzyme catalyses adenosine(1518)/adenosine(1519) in 16S rRNA + 4 S-adenosyl-L-methionine = N(6)-dimethyladenosine(1518)/N(6)-dimethyladenosine(1519) in 16S rRNA + 4 S-adenosyl-L-homocysteine + 4 H(+). In terms of biological role, specifically dimethylates two adjacent adenosines (A1518 and A1519) in the loop of a conserved hairpin near the 3'-end of 16S rRNA in the 30S particle. May play a critical role in biogenesis of 30S subunits. The protein is Ribosomal RNA small subunit methyltransferase A of Sinorhizobium medicae (strain WSM419) (Ensifer medicae).